Reading from the N-terminus, the 915-residue chain is MVQLGKLLRVLTLMKFPCCVLEVLLCVLAAAARGQEMYAPHSIRIEGDVTLGGLFPVHAKGPSGVPCGDIKRENGIHRLEAMLYALDQINSDPNLLPNVTLGARILDTCSRDTYALEQSLTFVQALIQKDTSDVRCTNGEPPVFVKPEKVVGVIGASGSSVSIMVANILRLFQIPQISYASTAPELSDDRRYDFFSRVVPPDSFQAQAMVDIVKALGWNYVSTLASEGSYGEKGVESFTQISKEAGGLCIAQSVRIPQERKDRTIDFDRIIKQLLDTPNSRAVVIFANDEDIKQILAAAKRADQVGHFLWVGSDSWGSKINPLHQHEDIAEGAITIQPKRATVEGFDAYFTSRTLENNRRNVWFAEYWEENFNCKLTISGSKKEDTDRKCTGQERIGKDSNYEQEGKVQFVIDAVYAMAHALHHMNKDLCADYRGVCPEMEQAGGKKLLKYIRNVNFNGSAGTPVMFNKNGDAPGRYDIFQYQTTNTTNPGYRLIGQWTDELQLNIEDMQWGKGVREIPPSVCTLPCKPGQRKKTQKGTPCCWTCEPCDGYQYQFDEMTCQHCPYDQRPNENRTGCQNIPIIKLEWHSPWAVIPVFLAMLGIIATIFVMATFIRYNDTPIVRASGRELSYVLLTGIFLCYIITFLMIAKPDVAVCSFRRVFLGLGMCISYAALLTKTNRIYRIFEQGKKSVTAPRLISPTSQLAITSSLISVQLLGVFIWFGVDPPNIIIDYDEHKTMNPEQARGVLKCDITDLQIICSLGYSILLMVTCTVYAIKTRGVPENFNEAKPIGFTMYTTCIVWLAFIPIFFGTAQSAEKLYIQTTTLTISMNLSASVALGMLYMPKVYIIIFHPELNVQKRKRSFKAVVTAATMSSRLSHKPSDRPNGEAKTELCENVDPNSPAAKKKYVSYNNLVI.

Positions 1 to 34 are cleaved as a signal peptide; the sequence is MVQLGKLLRVLTLMKFPCCVLEVLLCVLAAAARG. Residues 35-590 are Extracellular-facing; the sequence is QEMYAPHSIR…IIKLEWHSPW (556 aa). Cys67 and Cys109 are oxidised to a cystine. The N-linked (GlcNAc...) asparagine glycan is linked to Asn98. Residues Ser159, 180–182, Tyr230, and Asp314 each bind L-glutamate; that span reads AST. Disulfide bonds link Cys249–Cys541, Cys374–Cys390, Cys430–Cys437, Cys523–Cys542, Cys527–Cys545, Cys548–Cys560, and Cys563–Cys576. Lys407 serves as a coordination point for L-glutamate. N-linked (GlcNAc...) asparagine glycans are attached at residues Asn458 and Asn486. Residue Asn572 is glycosylated (N-linked (GlcNAc...) asparagine). A helical transmembrane segment spans residues 591–615; it reads AVIPVFLAMLGIIATIFVMATFIRY. Topologically, residues 616–627 are cytoplasmic; that stretch reads NDTPIVRASGRE. Residues 628 to 648 traverse the membrane as a helical segment; that stretch reads LSYVLLTGIFLCYIITFLMIA. The Extracellular segment spans residues 649-654; the sequence is KPDVAV. A helical membrane pass occupies residues 655–675; that stretch reads CSFRRVFLGLGMCISYAALLT. Residues 676–702 lie on the Cytoplasmic side of the membrane; sequence KTNRIYRIFEQGKKSVTAPRLISPTSQ. The helical transmembrane segment at 703–723 threads the bilayer; it reads LAITSSLISVQLLGVFIWFGV. The Extracellular portion of the chain corresponds to 724–753; the sequence is DPPNIIIDYDEHKTMNPEQARGVLKCDITD. A helical membrane pass occupies residues 754-775; it reads LQIICSLGYSILLMVTCTVYAI. The Cytoplasmic segment spans residues 776–788; that stretch reads KTRGVPENFNEAK. The chain crosses the membrane as a helical span at residues 789-810; it reads PIGFTMYTTCIVWLAFIPIFFG. Topologically, residues 811-825 are extracellular; that stretch reads TAQSAEKLYIQTTTL. The helical transmembrane segment at 826-850 threads the bilayer; that stretch reads TISMNLSASVALGMLYMPKVYIIIF. Over 851–915 the chain is Cytoplasmic; the sequence is HPELNVQKRK…KYVSYNNLVI (65 aa). The interval 874-895 is disordered; sequence SRLSHKPSDRPNGEAKTELCEN. Positions 879 to 892 are enriched in basic and acidic residues; it reads KPSDRPNGEAKTEL. Ser900 is subject to Phosphoserine.

This sequence belongs to the G-protein coupled receptor 3 family. Homodimer. Interacts with PICK1.

The protein resides in the cell membrane. Its function is as follows. G-protein coupled receptor activated by glutamate that regulates axon outgrowth through the MAPK-cAMP-PKA signaling pathway during neuronal development. Ligand binding causes a conformation change that triggers signaling via guanine nucleotide-binding proteins (G proteins) and modulates the activity of downstream effectors, such as adenylate cyclase that it inhibits. In Mus musculus (Mouse), this protein is Metabotropic glutamate receptor 7 (Grm7).